The following is a 433-amino-acid chain: MLTRSVLRKAPRAFSPFLQKRNLALHEYISHDILRKFGVDVPRGAPARSGEEAEKVARDLKVTDLVVKAQVLAGGRGKGQFDSGLRGGVRPVYDATEARMFAEQMIGHKLITRQTGPAGKICNVVYVCERKFIRKEYYFAILMDRENQCPMIVASDQGGVDIETVAAENPSAIIKRSLPNSPNLDPHIAEELVDKLGFSSSSKPKAVDAIVKLYKVFNDCDATQVEINPLAETTDHKVLCMDAKLNFDDNAEFRHSNIFVLRDISQEDPDEARAAKVGLNFIKLDGNIGCLVNGAGLAMATMDIIKLHGGEPANFLDVGGNANAEAIREAFSLITNDPKTTAIFVNIFGGIVRCDVIAKGLISVVSALNLNIPIICRLQGTNQGAAKEVINNSGLRIFSFDDLDEAAKKACRFSRVVEMAREADVNVSFELPL.

The transit peptide at 1 to 23 (MLTRSVLRKAPRAFSPFLQKRNL) directs the protein to the mitochondrion. The 243-residue stretch at 31–273 (HDILRKFGVD…ISQEDPDEAR (243 aa)) folds into the ATP-grasp domain. Residues lysine 68, 75–77 (GRG), and glutamate 136 contribute to the ATP site. Positions 228 and 242 each coordinate Mg(2+). Residues asparagine 293 and 350-352 (GIV) each bind substrate.

Belongs to the succinate/malate CoA ligase beta subunit family. In terms of assembly, heterodimer of an alpha and a beta subunit. It depends on Mg(2+) as a cofactor.

The protein resides in the mitochondrion. The catalysed reaction is succinate + ATP + CoA = succinyl-CoA + ADP + phosphate. It functions in the pathway carbohydrate metabolism; tricarboxylic acid cycle; succinate from succinyl-CoA (ligase route): step 1/1. Its function is as follows. Succinyl-CoA synthetase functions in the citric acid cycle (TCA), coupling the hydrolysis of succinyl-CoA to the synthesis of ATP and thus represents the only step of substrate-level phosphorylation in the TCA. The beta subunit provides nucleotide specificity of the enzyme and binds the substrate succinate, while the binding sites for coenzyme A and phosphate are found in the alpha subunit. The sequence is that of Succinate--CoA ligase [ADP-forming] subunit beta, mitochondrial from Schizosaccharomyces pombe (strain 972 / ATCC 24843) (Fission yeast).